The primary structure comprises 357 residues: Peptide chain release factor 1 (357 aa).

Residue Q234 is modified to N5-methylglutamine. The span at 284–307 shows a compositional bias: basic and acidic residues; sequence KKQEQRSNDRKQQVGSGDRSERIR. The tract at residues 284–313 is disordered; sequence KKQEQRSNDRKQQVGSGDRSERIRTYNFPQ.

Belongs to the prokaryotic/mitochondrial release factor family. Methylated by PrmC. Methylation increases the termination efficiency of RF1.

Its subcellular location is the cytoplasm. Its function is as follows. Peptide chain release factor 1 directs the termination of translation in response to the peptide chain termination codons UAG and UAA. In Borrelia hermsii (strain HS1 / DAH), this protein is Peptide chain release factor 1.